Reading from the N-terminus, the 828-residue chain is Leucine--tRNA ligase (828 aa).

A 'HIGH' region motif is present at residues Pro-42–His-52. The 'KMSKS' region motif lies at Lys-582 to Ser-586. Residue Lys-585 coordinates ATP.

The protein belongs to the class-I aminoacyl-tRNA synthetase family.

The protein resides in the cytoplasm. The catalysed reaction is tRNA(Leu) + L-leucine + ATP = L-leucyl-tRNA(Leu) + AMP + diphosphate. This is Leucine--tRNA ligase from Petrotoga mobilis (strain DSM 10674 / SJ95).